Consider the following 256-residue polypeptide: 2,3,4,5-tetrahydropyridine-2,6-dicarboxylate N-acetyltransferase (256 aa).

It belongs to the transferase hexapeptide repeat family. DapH subfamily.

The catalysed reaction is (S)-2,3,4,5-tetrahydrodipicolinate + acetyl-CoA + H2O = L-2-acetamido-6-oxoheptanedioate + CoA. Its pathway is amino-acid biosynthesis; L-lysine biosynthesis via DAP pathway; LL-2,6-diaminopimelate from (S)-tetrahydrodipicolinate (acetylase route): step 1/3. In terms of biological role, catalyzes the transfer of an acetyl group from acetyl-CoA to tetrahydrodipicolinate. This chain is 2,3,4,5-tetrahydropyridine-2,6-dicarboxylate N-acetyltransferase, found in Lactococcus lactis subsp. lactis (strain IL1403) (Streptococcus lactis).